We begin with the raw amino-acid sequence, 412 residues long: Polyferredoxin protein MvhB (412 aa).

4Fe-4S ferredoxin-type domains are found at residues 2-29 (IVIN…VKPE), 30-57 (DVIY…HEDI), 66-95 (KKIT…LVND), 96-127 (GKAS…IEGV), 138-166 (DKPI…LPKY), 168-197 (ESIE…ISGK), 207-236 (ENFT…PKSD), 237-265 (LTVS…LEVK), 275-304 (EGIV…VVSP), 311-344 (GLKK…LVEV), 356-385 (NRIQ…LTDD), and 386-412 (EKLP…LLIK). The [4Fe-4S] cluster site is built by Cys9, Cys12, Cys15, and Cys19. The [4Fe-4S] cluster site is built by Cys75, Cys78, Cys81, Cys85, Cys107, Cys110, Cys113, Cys117, Cys146, Cys149, Cys152, Cys156, Cys177, Cys180, Cys183, Cys187, Cys216, Cys219, Cys222, Cys226, Cys245, Cys248, Cys251, Cys255, Cys284, Cys287, Cys290, Cys294, Cys324, Cys327, Cys330, Cys334, Cys365, Cys368, Cys371, and Cys375.

[4Fe-4S] cluster serves as cofactor.

In Methanothermus fervidus, this protein is Polyferredoxin protein MvhB (mvhB).